The chain runs to 417 residues: Serine hydroxymethyltransferase (417 aa).

Residues Leu120 and 124–126 (GHL) contribute to the (6S)-5,6,7,8-tetrahydrofolate site. Position 229 is an N6-(pyridoxal phosphate)lysine (Lys229).

It belongs to the SHMT family. In terms of assembly, homodimer. Requires pyridoxal 5'-phosphate as cofactor.

It localises to the cytoplasm. It carries out the reaction (6R)-5,10-methylene-5,6,7,8-tetrahydrofolate + glycine + H2O = (6S)-5,6,7,8-tetrahydrofolate + L-serine. Its pathway is one-carbon metabolism; tetrahydrofolate interconversion. It functions in the pathway amino-acid biosynthesis; glycine biosynthesis; glycine from L-serine: step 1/1. Functionally, catalyzes the reversible interconversion of serine and glycine with tetrahydrofolate (THF) serving as the one-carbon carrier. This reaction serves as the major source of one-carbon groups required for the biosynthesis of purines, thymidylate, methionine, and other important biomolecules. Also exhibits THF-independent aldolase activity toward beta-hydroxyamino acids, producing glycine and aldehydes, via a retro-aldol mechanism. This is Serine hydroxymethyltransferase from Anaeromyxobacter sp. (strain K).